A 502-amino-acid polypeptide reads, in one-letter code: ATP synthase subunit alpha, sodium ion specific (502 aa).

169–176 is an ATP binding site; it reads GDRQTGKT.

The protein belongs to the ATPase alpha/beta chains family. F-type ATPases have 2 components, CF(1) - the catalytic core - and CF(0) - the membrane proton channel. CF(1) has five subunits: alpha(3), beta(3), gamma(1), delta(1), epsilon(1). CF(0) has three main subunits: a, b and c.

It is found in the cell membrane. It carries out the reaction 4 Na(+)(in) + ATP + H2O = 4 Na(+)(out) + ADP + phosphate + H(+). Inhibited by nitrate. Functionally, produces ATP from ADP in the presence of a sodium ion gradient across the membrane. The alpha chain is a regulatory subunit. The protein is ATP synthase subunit alpha, sodium ion specific of Acetobacterium woodii (strain ATCC 29683 / DSM 1030 / JCM 2381 / KCTC 1655 / WB1).